Here is a 209-residue protein sequence, read N- to C-terminus: Putative tripartite motif-containing protein 61 (209 aa).

The RING-type zinc-finger motif lies at 16–57; that stretch reads CPICLDYLKDPVTISCGHNFCLSCIIMSWKDLHDSFPCPFCH. Residues 92–133 form a B box-type zinc finger; that stretch reads EEKHVCKKHNQVLTFFCQKDLELLCPRCSLSTDHQHHCVWPI. Cys97, His100, Cys119, and His125 together coordinate Zn(2+).

The polypeptide is Putative tripartite motif-containing protein 61 (TRIM61) (Homo sapiens (Human)).